The sequence spans 146 residues: Putative pre-16S rRNA nuclease (146 aa).

It belongs to the YqgF nuclease family.

The protein resides in the cytoplasm. Its function is as follows. Could be a nuclease involved in processing of the 5'-end of pre-16S rRNA. This chain is Putative pre-16S rRNA nuclease, found in Mycoplasmopsis pulmonis (strain UAB CTIP) (Mycoplasma pulmonis).